A 63-amino-acid polypeptide reads, in one-letter code: Large ribosomal subunit protein bL32 (63 aa).

Residues Met-1–Asp-45 are disordered. Residues Lys-7–Arg-16 show a composition bias toward basic residues. The span at Pro-25–Glu-35 shows a compositional bias: polar residues.

This sequence belongs to the bacterial ribosomal protein bL32 family.

The polypeptide is Large ribosomal subunit protein bL32 (Legionella pneumophila (strain Paris)).